A 103-amino-acid polypeptide reads, in one-letter code: Hexon-interlacing protein (103 aa).

The stretch at 72 to 99 forms a coiled coil; that stretch reads LDELKIQVAAMQNSVTAIQREVNDLKQR.

Belongs to the adenoviridae hexon-interlacing protein family. Homotrimer. Interacts with hexon protein; this interaction tethers the hexons together. Self-interacts with adjacent proteins. Interacts with kinesin light chain KLC1; this interaction leads to capsid disruption at the nuclear pore complex during virus entry into host cell.

Its subcellular location is the virion. The protein resides in the host nucleus. Functionally, structural component of the virion that acts as a cement protein on the capsid exterior and forms triskelion structures consisting of three molecules that stabilize three hexon trimers at the center of each icosahedral facet and fixes the peripentonal hexons. Dispensable for assembly. During virus entry, recruits the anterograde motor kinesin-1 to the capsid docked at the nuclear pore complex thereby subjecting the docked capsid to a pulling force. The resulting tension leads to capsid disruption, dispersion of capsid fragments toward cell periphery and eventually viral DNA entry into the host nucleus. The chain is Hexon-interlacing protein from Canis lupus familiaris (Dog).